We begin with the raw amino-acid sequence, 98 residues long: NADH-ubiquinone oxidoreductase chain 4L (98 aa).

Helical transmembrane passes span 1–21 (MIPTYMNIMLAFTISLLGMLI), 29–49 (SLLCLEGMMMSLFIMTTLIAL), and 61–81 (IILLVFAACEAAVGLALLVSI).

Belongs to the complex I subunit 4L family. As to quaternary structure, core subunit of respiratory chain NADH dehydrogenase (Complex I) which is composed of 45 different subunits.

The protein resides in the mitochondrion inner membrane. The catalysed reaction is a ubiquinone + NADH + 5 H(+)(in) = a ubiquinol + NAD(+) + 4 H(+)(out). Core subunit of the mitochondrial membrane respiratory chain NADH dehydrogenase (Complex I) which catalyzes electron transfer from NADH through the respiratory chain, using ubiquinone as an electron acceptor. Part of the enzyme membrane arm which is embedded in the lipid bilayer and involved in proton translocation. This is NADH-ubiquinone oxidoreductase chain 4L (MT-ND4L) from Macaca ochreata (Booted macaque).